We begin with the raw amino-acid sequence, 282 residues long: Fibrinogen-like protein A (282 aa).

A signal peptide spans 1–24 (MFSFIMKAAILLILVGCISFCISS). The Fibrinogen C-terminal domain maps to 61 to 281 (SHSPEYPRDC…FAEMKLRNRS (221 aa)). Intrachain disulfides connect C70–C101 and C224–C240.

The chain is Fibrinogen-like protein A from Apostichopus parvimensis (Warty sea cucumber).